Reading from the N-terminus, the 308-residue chain is D-alanine--D-alanine ligase (308 aa).

The ATP-grasp domain maps to 102–302; sequence KTVAKSAGIP…FGALLSWMVE (201 aa). ATP is bound at residue 128–183; it reads PMEPPYVVKPVAEGSSFGVVIVREGQSHPPQVLGSAEWGYGERVMVERYIPGRELT. Mg(2+)-binding residues include Asp-252, Glu-269, and Asn-271.

The protein belongs to the D-alanine--D-alanine ligase family. The cofactor is Mg(2+). Mn(2+) is required as a cofactor.

Its subcellular location is the cytoplasm. It carries out the reaction 2 D-alanine + ATP = D-alanyl-D-alanine + ADP + phosphate + H(+). The protein operates within cell wall biogenesis; peptidoglycan biosynthesis. Cell wall formation. The polypeptide is D-alanine--D-alanine ligase (Chelativorans sp. (strain BNC1)).